The following is a 348-amino-acid chain: Protein RecA (348 aa).

ATP is bound at residue 66–73 (GPESSGKT).

Belongs to the RecA family.

The protein resides in the cytoplasm. Can catalyze the hydrolysis of ATP in the presence of single-stranded DNA, the ATP-dependent uptake of single-stranded DNA by duplex DNA, and the ATP-dependent hybridization of homologous single-stranded DNAs. It interacts with LexA causing its activation and leading to its autocatalytic cleavage. This chain is Protein RecA, found in Neisseria gonorrhoeae (strain NCCP11945).